Here is a 298-residue protein sequence, read N- to C-terminus: MAKKDEHLRKPEWLKIKLNTNENYTGLKKLMRENNLHTVCEEAKCPNIHECWAVRRTATFMILGSVCTRACRFCAVKTGLPTELDLQEPERVADSVALMNLKHAVITAVARDDQKDGGAGIFAETVRAIRRKSPFTTIEVLPSDMGGNYDNLKTLMDTRPDILNHNIETVRRLTPRVRARATYDRSLEFLRRAKEMQPDIPTKSSIMIGLGETKEEIIEVMDDLLANNVDIMAIGQYLQPTKKHLKVQKYYHPDEFAELKEIAMQKGFSHCEAGPLVRSSYHADEQVNEASKKRQAQA.

[4Fe-4S] cluster-binding residues include cysteine 40, cysteine 45, cysteine 51, cysteine 67, cysteine 71, cysteine 74, and serine 280. One can recognise a Radical SAM core domain in the interval 53–269 (AVRRTATFMI…KEIAMQKGFS (217 aa)).

This sequence belongs to the radical SAM superfamily. Lipoyl synthase family. [4Fe-4S] cluster serves as cofactor.

It localises to the cytoplasm. The catalysed reaction is [[Fe-S] cluster scaffold protein carrying a second [4Fe-4S](2+) cluster] + N(6)-octanoyl-L-lysyl-[protein] + 2 oxidized [2Fe-2S]-[ferredoxin] + 2 S-adenosyl-L-methionine + 4 H(+) = [[Fe-S] cluster scaffold protein] + N(6)-[(R)-dihydrolipoyl]-L-lysyl-[protein] + 4 Fe(3+) + 2 hydrogen sulfide + 2 5'-deoxyadenosine + 2 L-methionine + 2 reduced [2Fe-2S]-[ferredoxin]. It functions in the pathway protein modification; protein lipoylation via endogenous pathway; protein N(6)-(lipoyl)lysine from octanoyl-[acyl-carrier-protein]. Its function is as follows. Catalyzes the radical-mediated insertion of two sulfur atoms into the C-6 and C-8 positions of the octanoyl moiety bound to the lipoyl domains of lipoate-dependent enzymes, thereby converting the octanoylated domains into lipoylated derivatives. In Bacillus subtilis (strain 168), this protein is Lipoyl synthase.